Here is a 312-residue protein sequence, read N- to C-terminus: Magnesium protoporphyrin IX methyltransferase, chloroplastic (312 aa).

The transit peptide at 1–39 (MPFAPSLLSSSSSVSQFLPRFPNATRFNVTPRSRAATVV) directs the protein to the chloroplast.

The protein belongs to the class I-like SAM-binding methyltransferase superfamily. Magnesium protoporphyrin O-methyltransferase family.

The protein localises to the plastid. Its subcellular location is the chloroplast membrane. The protein resides in the chloroplast thylakoid membrane. It carries out the reaction Mg-protoporphyrin IX + S-adenosyl-L-methionine = Mg-protoporphyrin IX 13-monomethyl ester + S-adenosyl-L-homocysteine. The protein operates within porphyrin-containing compound metabolism; chlorophyll biosynthesis. Its activity is regulated as follows. Regulated by the folate status via an increased concentration of S-adenosyl-homocysteine (AdoHcy), a potent inhibitor of most AdoMet-dependent methyltransferases. Converts Mg-protoporphyrin IX to Mg-protoporphyrin IX methylester using S-adenosyl-L-methionine as a cofactor. Involved in chloroplast-to-nucleus signaling by acting as a negative effector of nuclear photosynthetic gene expression. This is Magnesium protoporphyrin IX methyltransferase, chloroplastic (CHLM) from Arabidopsis thaliana (Mouse-ear cress).